A 388-amino-acid polypeptide reads, in one-letter code: Zinc finger protein ubi-d4 A (388 aa).

Residues 60 to 190 form a disordered region; the sequence is GPGSAPGQLY…AKGKGIGSAR (131 aa). Composition is skewed to basic and acidic residues over residues 97–107 and 123–137; these read PDPEQMLKKEG and DPIE…RDDD. Residues 156–170 show a composition bias toward acidic residues; the sequence is PDDFLDDLDDEDYEE. Residues 205–228 form a C2H2-type zinc finger; the sequence is YACDICGKRYKNRPGLSYHYAHSH. The disordered stretch occupies residues 233 to 264; that stretch reads EGAGAEDKEDSQPPTPIMHRPEEQKSKKGPDG. Residues 251-262 show a composition bias toward basic and acidic residues; it reads HRPEEQKSKKGP. 2 PHD-type zinc fingers span residues 269-329 and 326-376; these read NNYC…CKCC and CKCC…CLDL.

Belongs to the requiem/DPF family.

The protein localises to the cytoplasm. It localises to the nucleus. Its function is as follows. May be a transcription factor required for the apoptosis response following survival factor withdrawal from myeloid cells. Might also have a role in the development and maturation of lymphoid cells. In Xenopus laevis (African clawed frog), this protein is Zinc finger protein ubi-d4 A (req-a).